Here is a 357-residue protein sequence, read N- to C-terminus: Isopentenyl-diphosphate delta-isomerase (357 aa).

Residue 12-13 coordinates substrate; that stretch reads RK. FMN is bound by residues Ser70, 71–73, Ser101, and Asn130; that span reads SMT. Residue 101-103 participates in substrate binding; that stretch reads SMR. Residue Gln165 coordinates substrate. Glu166 is a Mg(2+) binding site. Residues Lys197, 289 to 291, and 310 to 311 contribute to the FMN site; these read GIR and AQ.

This sequence belongs to the IPP isomerase type 2 family. Homooctamer. Dimer of tetramers. FMN is required as a cofactor. Requires NADPH as cofactor. It depends on Mg(2+) as a cofactor.

It is found in the cytoplasm. The catalysed reaction is isopentenyl diphosphate = dimethylallyl diphosphate. Involved in the biosynthesis of isoprenoids. Catalyzes the 1,3-allylic rearrangement of the homoallylic substrate isopentenyl (IPP) to its allylic isomer, dimethylallyl diphosphate (DMAPP). This Chlorobaculum parvum (strain DSM 263 / NCIMB 8327) (Chlorobium vibrioforme subsp. thiosulfatophilum) protein is Isopentenyl-diphosphate delta-isomerase.